A 20-amino-acid polypeptide reads, in one-letter code: Non-specific lipid-transfer protein (20 aa).

It belongs to the plant LTP family. As to expression, leaf.

Its function is as follows. Plant non-specific lipid-transfer proteins transfer phospholipids as well as galactolipids across membranes. May play a role in wax or cutin deposition in the cell walls of expanding epidermal cells and certain secretory tissues. This Cannabis sativa (Hemp) protein is Non-specific lipid-transfer protein.